The following is a 209-amino-acid chain: Imidazole glycerol phosphate synthase subunit HisH (209 aa).

Positions 5–209 constitute a Glutamine amidotransferase type-1 domain; it reads AIAIIDYDMG…LRNFVALVKD (205 aa). Cys83 (nucleophile) is an active-site residue. Catalysis depends on residues His188 and Glu190.

Heterodimer of HisH and HisF.

It localises to the cytoplasm. The catalysed reaction is 5-[(5-phospho-1-deoxy-D-ribulos-1-ylimino)methylamino]-1-(5-phospho-beta-D-ribosyl)imidazole-4-carboxamide + L-glutamine = D-erythro-1-(imidazol-4-yl)glycerol 3-phosphate + 5-amino-1-(5-phospho-beta-D-ribosyl)imidazole-4-carboxamide + L-glutamate + H(+). It catalyses the reaction L-glutamine + H2O = L-glutamate + NH4(+). It functions in the pathway amino-acid biosynthesis; L-histidine biosynthesis; L-histidine from 5-phospho-alpha-D-ribose 1-diphosphate: step 5/9. In terms of biological role, IGPS catalyzes the conversion of PRFAR and glutamine to IGP, AICAR and glutamate. The HisH subunit catalyzes the hydrolysis of glutamine to glutamate and ammonia as part of the synthesis of IGP and AICAR. The resulting ammonia molecule is channeled to the active site of HisF. In Thermosynechococcus vestitus (strain NIES-2133 / IAM M-273 / BP-1), this protein is Imidazole glycerol phosphate synthase subunit HisH.